A 151-amino-acid chain; its full sequence is UPF0208 membrane protein Ent638_2839 (151 aa).

The next 2 helical transmembrane spans lie at 46–65 (YAIR…QIAL) and 69–91 (LGPA…WWLG).

Belongs to the UPF0208 family.

The protein resides in the cell inner membrane. This is UPF0208 membrane protein Ent638_2839 from Enterobacter sp. (strain 638).